The chain runs to 463 residues: Cytochrome P450 4d8 (463 aa).

Positions 267 and 409 each coordinate heme.

This sequence belongs to the cytochrome P450 family. Requires heme as cofactor.

The protein localises to the endoplasmic reticulum membrane. It is found in the microsome membrane. In terms of biological role, may be involved in the metabolism of insect hormones and in the breakdown of synthetic insecticides. The sequence is that of Cytochrome P450 4d8 (Cyp4d8) from Drosophila melanogaster (Fruit fly).